Consider the following 162-residue polypeptide: UPF0114 protein Pput_0713 (162 aa).

A run of 4 helical transmembrane segments spans residues 15–35 (LLAPIYFGLSLGLLALALKFF), 53–73 (LILVILSLIDMSLVGGLLVMV), 109–126 (VAASIVAISSIHLLRVFM), and 136–156 (LMWYVIIHMTFVVSAFCMGYL).

It belongs to the UPF0114 family.

The protein localises to the cell membrane. The protein is UPF0114 protein Pput_0713 of Pseudomonas putida (strain ATCC 700007 / DSM 6899 / JCM 31910 / BCRC 17059 / LMG 24140 / F1).